A 279-amino-acid polypeptide reads, in one-letter code: Large ribosomal subunit protein uL2 (279 aa).

Disordered regions lie at residues 33–58 and 223–279; these read LLAP…GGGH and GVAM…RKRG. Composition is skewed to basic residues over residues 40 to 58 and 269 to 279; these read KGGR…GGGH and VRRRYATRKRG.

Belongs to the universal ribosomal protein uL2 family. As to quaternary structure, part of the 50S ribosomal subunit. Forms a bridge to the 30S subunit in the 70S ribosome.

Its function is as follows. One of the primary rRNA binding proteins. Required for association of the 30S and 50S subunits to form the 70S ribosome, for tRNA binding and peptide bond formation. It has been suggested to have peptidyltransferase activity; this is somewhat controversial. Makes several contacts with the 16S rRNA in the 70S ribosome. The chain is Large ribosomal subunit protein uL2 from Salinispora arenicola (strain CNS-205).